The following is a 201-amino-acid chain: FMN-dependent NADH:quinone oxidoreductase (201 aa).

FMN-binding positions include Ser-10, 16–18 (SQS), 96–99 (MYNF), and 140–143 (SRGG).

The protein belongs to the azoreductase type 1 family. In terms of assembly, homodimer. It depends on FMN as a cofactor.

It catalyses the reaction 2 a quinone + NADH + H(+) = 2 a 1,4-benzosemiquinone + NAD(+). The catalysed reaction is N,N-dimethyl-1,4-phenylenediamine + anthranilate + 2 NAD(+) = 2-(4-dimethylaminophenyl)diazenylbenzoate + 2 NADH + 2 H(+). Functionally, quinone reductase that provides resistance to thiol-specific stress caused by electrophilic quinones. Also exhibits azoreductase activity. Catalyzes the reductive cleavage of the azo bond in aromatic azo compounds to the corresponding amines. The sequence is that of FMN-dependent NADH:quinone oxidoreductase from Citrobacter koseri (strain ATCC BAA-895 / CDC 4225-83 / SGSC4696).